Here is a 645-residue protein sequence, read N- to C-terminus: 1-deoxy-D-xylulose-5-phosphate synthase 1 (645 aa).

The disordered stretch occupies residues 1-20 (MTDTKTPTLDRVAGPADLRS). Thiamine diphosphate is bound by residues H78 and 119-121 (AHS). A Mg(2+)-binding site is contributed by D150. Thiamine diphosphate contacts are provided by residues 151–152 (GS), N179, Y291, and E373. Mg(2+) is bound at residue N179.

Belongs to the transketolase family. DXPS subfamily. Homodimer. Mg(2+) serves as cofactor. It depends on thiamine diphosphate as a cofactor.

The catalysed reaction is D-glyceraldehyde 3-phosphate + pyruvate + H(+) = 1-deoxy-D-xylulose 5-phosphate + CO2. It participates in metabolic intermediate biosynthesis; 1-deoxy-D-xylulose 5-phosphate biosynthesis; 1-deoxy-D-xylulose 5-phosphate from D-glyceraldehyde 3-phosphate and pyruvate: step 1/1. Catalyzes the acyloin condensation reaction between C atoms 2 and 3 of pyruvate and glyceraldehyde 3-phosphate to yield 1-deoxy-D-xylulose-5-phosphate (DXP). This Roseobacter denitrificans (strain ATCC 33942 / OCh 114) (Erythrobacter sp. (strain OCh 114)) protein is 1-deoxy-D-xylulose-5-phosphate synthase 1.